Consider the following 1188-residue polypeptide: uncharacterized protein (1188 aa).

4 disordered regions span residues 126–468 (GDLR…SQME), 484–771 (EDRF…LYKP), 790–823 (ARGG…TDEL), and 847–1039 (QRAQ…FSRF). 3 stretches are compositionally biased toward pro residues: residues 139–151 (IPPP…PGPP), 159–193 (GGSP…PPPV), and 208–240 (IPTP…PAPA). Ser-260 is modified (phosphoserine). Residues 322–331 (EAPRKEEGAT) are compositionally biased toward basic and acidic residues. Residues 389–418 (TPPPAPPLPPPAPPLPPPAPPLPPAAPPLP) show a composition bias toward pro residues. Low complexity predominate over residues 432–441 (KTPKSSSPAL). Composition is skewed to basic and acidic residues over residues 501 to 514 (KEGK…EKET) and 566 to 583 (IRNE…KEAK). Over residues 618-633 (LPPQSTTLLPTTSLQP) the composition is skewed to low complexity. Over residues 640-652 (AIPPKATPEPAIP) the composition is skewed to pro residues. Thr-666 bears the Phosphothreonine mark. Positions 689–703 (PAIASTATTLPTTTS) are enriched in low complexity. Positions 875–893 (AEASSDSIFHSQGTPNSFT) are enriched in polar residues. Over residues 920-931 (LGRDAEGTELSR) the composition is skewed to basic and acidic residues. Residues 986-1001 (IPPPPEFSNDPEPPAP) show a composition bias toward pro residues. Over residues 1007 to 1019 (GRQSSPPRNNYSD) the composition is skewed to polar residues. Residues 1026–1035 (AGPGAPPALG) show a composition bias toward low complexity. At Arg-1044 the chain carries Asymmetric dimethylarginine. A disordered region spans residues 1069–1160 (GEPHRGPGLP…SPYTTTRYGS (92 aa)). An omega-N-methylarginine mark is found at Arg-1073 and Arg-1084. Arg-1157 carries the asymmetric dimethylarginine modification.

This is an uncharacterized protein from Homo sapiens (Human).